Reading from the N-terminus, the 708-residue chain is Protein SUPPRESSOR OF MAX2 1A (708 aa).

Residues 248–283 (QMASKPQEKAASPPGSPVRTDLVLGPKQTETTPEKT) form a disordered region. An EAR motif is present at residues 537 to 541 (FDLNE).

Belongs to the ClpA/ClpB family.

Functionally, probable component of a transcriptional corepressor complex that acts downstream of MAX2 to negatively regulate karrikins/strigolactone responses. Involved in the (-)-germacrene D signaling pathway influencing plant fitness and occurring in the stigma in a KAI2IA-dependent manner. The sequence is that of Protein SUPPRESSOR OF MAX2 1A from Petunia hybrida (Petunia).